Here is a 735-residue protein sequence, read N- to C-terminus: Exocyst complex component 7 (735 aa).

2 coiled-coil regions span residues 5–42 (QEAS…TKNM) and 63–85 (VHKQ…SCLD). Residue Ser-133 is modified to Phosphoserine. The segment at 239-268 (HKSSSSSGVPYSPAIPNKRKDTPTKKPVKR) is disordered.

Belongs to the EXO70 family. The exocyst complex is composed of EXOC1, EXOC2, EXOC3, EXOC4, EXOC5, EXOC6, EXOC7 and EXOC8. Interacts with ARHQ in a GTP-dependent manner. Interacts with RAB11FIP3. In terms of tissue distribution, abundant in the ventricular zone, the outer subventricular zone and the cortical plate of the fetal cortex.

It localises to the cytoplasm. The protein localises to the cytosol. It is found in the cell membrane. The protein resides in the midbody. Its subcellular location is the midbody ring. Its function is as follows. Component of the exocyst complex involved in the docking of exocytic vesicles with fusion sites on the plasma membrane. In adipocytes, plays a crucial role in targeting SLC2A4 vesicle to the plasma membrane in response to insulin, perhaps directing the vesicle to the precise site of fusion. It is required for neuron survival and plays an essential role in cortical development. The polypeptide is Exocyst complex component 7 (EXOC7) (Homo sapiens (Human)).